Here is a 105-residue protein sequence, read N- to C-terminus: Synaptic plasticity regulator PANTS (105 aa).

The protein belongs to the UPF0545 family. Interacts with RTN4 isoform A/Nogo-A; the interaction results in enhanced RTN4-mediated inhibition of AMPA receptor clustering. Also interacts with NCAM1, RANBP2 and CCT8. Post-translationally, rapidly degraded by proteolysis following neuronal stimulation, resulting in increased AMPA receptor clustering.

The protein localises to the synapse. It is found in the synaptic cleft. Negatively regulates long-term potentiation and modulates adult synaptic plasticity. Stabilizes the interaction of RTN4 isoform A/Nogo-A with its receptors, inhibiting clustering of postsynaptic AMPA receptors at synaptic sites. Upon neuronal stimulation, degraded at synapses, reducing RTN4 signaling and allowing AMPA receptor clustering at individual synapses. The chain is Synaptic plasticity regulator PANTS from Pongo abelii (Sumatran orangutan).